A 669-amino-acid polypeptide reads, in one-letter code: RNA-binding protein 14 (669 aa).

2 RRM domains span residues 1–73 (MKIF…MSRP) and 79–149 (WKIF…LSTK). Glycyl lysine isopeptide (Lys-Gly) (interchain with G-Cter in SUMO2) cross-links involve residues Lys-126, Lys-135, Lys-138, Lys-149, and Lys-153. Disordered stretches follow at residues 148–175 (TKGQKKGPGLAIQSGDKTKKPGAGDTAF) and 193–232 (NSTGGFDGQARQPTPPFFGRDRSPLRRSPPRASYVAPLTA). A Phosphoserine modification is found at Ser-161. Lys-164 carries the N6-acetyllysine; alternate modification. Lys-164 participates in a covalent cross-link: Glycyl lysine isopeptide (Lys-Gly) (interchain with G-Cter in SUMO2); alternate. The residue at position 206 (Thr-206) is a Phosphothreonine. Residues Ser-220, Ser-242, Ser-244, Ser-256, Ser-272, and Ser-280 each carry the phosphoserine modification. A disordered region spans residues 284–303 (PYRGQLASPSSQSAAASSLG). The segment covering 287 to 303 (GQLASPSSQSAAASSLG) has biased composition (low complexity). The TRBP-interacting domain; interaction with STIL stretch occupies residues 307-354 (GAQPSASALSSYGGQPAAASSLNSYGAQGSSLASYGNQPSSYGAQAAS). Phosphoserine is present on residues Ser-520, Ser-523, Ser-527, and Ser-562. A disordered region spans residues 569-590 (ANSTPPPYERTRLSPPRASYDD). At Thr-572 the chain carries Phosphothreonine. Ser-582 is modified (phosphoserine). A Glycyl lysine isopeptide (Lys-Gly) (interchain with G-Cter in SUMO2) cross-link involves residue Lys-600. Residues Ser-618, Ser-620, Ser-623, Ser-627, Ser-643, and Ser-649 each carry the phosphoserine modification.

In terms of assembly, interacts with NCOA6, CITED1 and XRCC5/KU86. Interacts with SS18. Interacts with STIL and interferes with its interaction with CPAP. Interacts with gamma-tubulin. Part of the HDP-RNP complex composed of at least HEXIM1, PRKDC, XRCC5, XRCC6, paraspeckle proteins (SFPQ, NONO, PSPC1, RBM14, and MATR3) and NEAT1 RNA.

Its subcellular location is the nucleus. The protein localises to the nucleolus. It is found in the cytoplasm. Its function is as follows. May function as a nuclear receptor coactivator, enhancing transcription through other coactivators such as NCOA6 and CITED1. Regulates centriole biogenesis by suppressing the formation of aberrant centriolar protein complexes in the cytoplasm and thus preserving mitotic spindle integrity. Prevents the formation of the STIL-CPAP complex (which can induce the formation of aberrant centriolar protein complexes) by interfering with the interaction of STIL with CPAP. Plays a role in the regulation of DNA virus-mediated innate immune response by assembling into the HDP-RNP complex, a complex that serves as a platform for IRF3 phosphorylation and subsequent innate immune response activation through the cGAS-STING pathway. This is RNA-binding protein 14 (RBM14) from Bos taurus (Bovine).